Consider the following 155-residue polypeptide: MHKNSKRNNNLRVSHTEANSVDAEKEKNESQNNFFELLPAEITFKIFSQLDIRSLCRASLTCRSWNDTIRNSDSLWKPHCMTVRAVCRREIDDDLESGYSWRVILLRNYQKSKVKHEWLSGRYSNICSPISLPEKIMYPMDADTWGEILEAELER.

The disordered stretch occupies residues 1–27 (MHKNSKRNNNLRVSHTEANSVDAEKEK). The span at 7–19 (RNNNLRVSHTEAN) shows a compositional bias: polar residues. The 48-residue stretch at 32-79 (NNFFELLPAEITFKIFSQLDIRSLCRASLTCRSWNDTIRNSDSLWKPH) folds into the F-box domain.

The chain is F-box only protein 48 (FBXO48) from Homo sapiens (Human).